The chain runs to 459 residues: Trigger factor (459 aa).

Positions 166 to 245 constitute a PPIase FKBP-type domain; that stretch reads GDFANIDLTA…VNSVKAEELP (80 aa).

This sequence belongs to the FKBP-type PPIase family. Tig subfamily.

It is found in the cytoplasm. The enzyme catalyses [protein]-peptidylproline (omega=180) = [protein]-peptidylproline (omega=0). Involved in protein export. Acts as a chaperone by maintaining the newly synthesized protein in an open conformation. Functions as a peptidyl-prolyl cis-trans isomerase. This is Trigger factor from Bifidobacterium longum subsp. infantis (strain ATCC 15697 / DSM 20088 / JCM 1222 / NCTC 11817 / S12).